Consider the following 540-residue polypeptide: PTS system alpha-glucoside-specific EIICB component (540 aa).

In terms of domain architecture, PTS EIIC type-1 spans 1–420 (MLSQIQRFGG…LNLKTPGREE (420 aa)). 11 consecutive transmembrane segments (helical) span residues 12–32 (MFTP…AIML), 87–107 (ACLA…AMGM), 130–150 (IAGI…SGLV), 174–194 (FVVI…LLGW), 201–221 (IESL…VYIF), 225–245 (ILIP…GPAV), 277–297 (FALH…ALYF), 307–327 (VAGL…TEPL), 329–349 (FTFL…AATM), 352–372 (VMYI…QFLP), and 384–404 (SMMF…FVVF). Positions 448–530 (LGQAAGFLQA…ENLMKDSLST (83 aa)) constitute a PTS EIIB type-1 domain. The active-site Phosphocysteine intermediate; for EIIB activity is Cys-470.

It localises to the cell membrane. Functionally, the phosphoenolpyruvate-dependent sugar phosphotransferase system (sugar PTS), a major carbohydrate active -transport system, catalyzes the phosphorylation of incoming sugar substrates concomitantly with their translocation across the cell membrane. This system is involved in alpha-glucoside transport. Its function is as follows. Involved in the transport and simultaneous phosphorylation at O-6 of the glucosyl moiety of sucrose and its five linkage-isomeric alpha-D-glucosyl-D-fructoses. Can also transport maltose, isomaltose and maltitol, phosphorylating at O-6 of their non-reducing glucose portion. The polypeptide is PTS system alpha-glucoside-specific EIICB component (aglA) (Klebsiella pneumoniae).